The primary structure comprises 357 residues: Membrane-bound lytic murein transglycosylase C (357 aa).

Positions 1 to 16 are cleaved as a signal peptide; the sequence is MKKMLALLVIAPLLVS. C17 carries N-palmitoyl cysteine lipidation. A lipid anchor (S-diacylglycerol cysteine) is attached at C17.

The protein belongs to the transglycosylase Slt family.

The protein localises to the cell outer membrane. The catalysed reaction is Exolytic cleavage of the (1-&gt;4)-beta-glycosidic linkage between N-acetylmuramic acid (MurNAc) and N-acetylglucosamine (GlcNAc) residues in peptidoglycan, from either the reducing or the non-reducing ends of the peptidoglycan chains, with concomitant formation of a 1,6-anhydrobond in the MurNAc residue.. Its function is as follows. Murein-degrading enzyme. May play a role in recycling of muropeptides during cell elongation and/or cell division. The polypeptide is Membrane-bound lytic murein transglycosylase C (Pectobacterium atrosepticum (strain SCRI 1043 / ATCC BAA-672) (Erwinia carotovora subsp. atroseptica)).